Reading from the N-terminus, the 399-residue chain is Elongation factor Tu (399 aa).

One can recognise a tr-type G domain in the interval 10–204 (KPHVNIGTIG…AVDASIPEPE (195 aa)). The segment at 19-26 (GHVDHGKT) is G1. 19–26 (GHVDHGKT) is a GTP binding site. Thr-26 contacts Mg(2+). The tract at residues 60–64 (GITIN) is G2. Residues 81–84 (DCPG) are G3. GTP contacts are provided by residues 81–85 (DCPGH) and 136–139 (NKCD). Residues 136–139 (NKCD) are G4. Positions 174-176 (SGL) are G5.

Belongs to the TRAFAC class translation factor GTPase superfamily. Classic translation factor GTPase family. EF-Tu/EF-1A subfamily. As to quaternary structure, monomer.

The protein localises to the cytoplasm. The catalysed reaction is GTP + H2O = GDP + phosphate + H(+). GTP hydrolase that promotes the GTP-dependent binding of aminoacyl-tRNA to the A-site of ribosomes during protein biosynthesis. In Synechococcus sp. (strain CC9311), this protein is Elongation factor Tu.